A 274-amino-acid polypeptide reads, in one-letter code: 2,3,4,5-tetrahydropyridine-2,6-dicarboxylate N-succinyltransferase (274 aa).

Substrate is bound by residues Arg-104 and Asp-141.

The protein belongs to the transferase hexapeptide repeat family. Homotrimer.

It is found in the cytoplasm. The catalysed reaction is (S)-2,3,4,5-tetrahydrodipicolinate + succinyl-CoA + H2O = (S)-2-succinylamino-6-oxoheptanedioate + CoA. The protein operates within amino-acid biosynthesis; L-lysine biosynthesis via DAP pathway; LL-2,6-diaminopimelate from (S)-tetrahydrodipicolinate (succinylase route): step 1/3. The polypeptide is 2,3,4,5-tetrahydropyridine-2,6-dicarboxylate N-succinyltransferase (Shewanella oneidensis (strain ATCC 700550 / JCM 31522 / CIP 106686 / LMG 19005 / NCIMB 14063 / MR-1)).